Here is a 212-residue protein sequence, read N- to C-terminus: Large ribosomal subunit protein uL3 (212 aa).

Positions 130-158 (KRGSMTHGSKNHRLPGSTGAGTTPGRVYP) are disordered.

The protein belongs to the universal ribosomal protein uL3 family. Part of the 50S ribosomal subunit. Forms a cluster with proteins L14 and L19.

One of the primary rRNA binding proteins, it binds directly near the 3'-end of the 23S rRNA, where it nucleates assembly of the 50S subunit. This is Large ribosomal subunit protein uL3 from Gloeothece citriformis (strain PCC 7424) (Cyanothece sp. (strain PCC 7424)).